The sequence spans 529 residues: Probable pectinesterase/pectinesterase inhibitor 35 (529 aa).

A signal peptide spans 1 to 34; sequence MATTSFSLPNHKFGIKLMLFLVLNLLSLQTSVFA. The interval 36–180 is pectinesterase inhibitor 35; sequence SSNSKFTKIS…TGLLTNSLDM (145 aa). The segment at 42-64 is disordered; it reads TKISRHPNSDSSSRTKPSTSSNK. The span at 50-64 shows a compositional bias: low complexity; the sequence is SDSSSRTKPSTSSNK. N-linked (GlcNAc...) asparagine glycans are attached at residues Asn-86, Asn-169, and Asn-193. Positions 228 to 514 are pectinesterase 35; sequence HAVVAADGSG…FTVSGFIDGN (287 aa). Positions 302 and 332 each coordinate substrate. Residue Asp-355 is the Proton donor; for pectinesterase activity of the active site. Asp-376 functions as the Nucleophile; for pectinesterase activity in the catalytic mechanism. Arg-434 and Trp-436 together coordinate substrate.

The protein in the N-terminal section; belongs to the PMEI family. It in the C-terminal section; belongs to the pectinesterase family. In terms of tissue distribution, expressed in siliques.

The protein resides in the secreted. The protein localises to the cell wall. The catalysed reaction is [(1-&gt;4)-alpha-D-galacturonosyl methyl ester](n) + n H2O = [(1-&gt;4)-alpha-D-galacturonosyl](n) + n methanol + n H(+). It functions in the pathway glycan metabolism; pectin degradation; 2-dehydro-3-deoxy-D-gluconate from pectin: step 1/5. Functionally, acts in the modification of cell walls via demethylesterification of cell wall pectin. This chain is Probable pectinesterase/pectinesterase inhibitor 35 (PME35), found in Arabidopsis thaliana (Mouse-ear cress).